Consider the following 467-residue polypeptide: Glycine--tRNA ligase (467 aa).

Arginine 100 and glutamate 175 together coordinate substrate. Residues 207-209 (RNE), 217-222 (FRTREF), 291-292 (EL), and 335-338 (GADR) contribute to the ATP site. Substrate is bound at residue 222-226 (FEQME). 331–335 (EPSLG) serves as a coordination point for substrate.

The protein belongs to the class-II aminoacyl-tRNA synthetase family. Homodimer.

The protein resides in the cytoplasm. It catalyses the reaction tRNA(Gly) + glycine + ATP = glycyl-tRNA(Gly) + AMP + diphosphate. Functionally, catalyzes the attachment of glycine to tRNA(Gly). The protein is Glycine--tRNA ligase of Clostridium perfringens (strain 13 / Type A).